A 260-amino-acid chain; its full sequence is MIIVLSPAKSLDYETPPHVKKHTIPDFVEDAAELIGGLRLLSPQQIASLMDISDQLAHLNFQRYAEWSPKFGAHNAKQAVLAFNGDVYEGFNAKTLSAADLDYAQNHVRVLSGLYGLLRPLDLLQPYRLEMGTRFANPRGKDLYAFWGERITQALNAQLKKNAVASRVLVNCASGEYFRSVKPKLLEAPVITPVFEDWKGGRYKIISFHAKRARGLMARYAVENRLDRPEQLKDFNAEGYAFDAEASNDSTYVFRRRVAE.

It belongs to the UPF0246 family.

In Paraburkholderia xenovorans (strain LB400), this protein is UPF0246 protein Bxeno_A1262.